The chain runs to 209 residues: NFKLVIVGDGGTGKTTFVKRHLTGEFEKKYEPTIGVEVHPLDFFTNCGKIRFYCWDTAGQEKFGGLRDGYYIHGQCAIIMFDVTARLTYKNVPTWHRDLCRVCENIPIVLCGNKVDVKNRQVKAKQVTFHRKKNLQYYEISAKSNYNFEKPFLYLARKLAGDPNLHFVESPALAPPEVQIDLAAQQQHEAELAAAASQPLPDDDDDAFD.

In terms of domain architecture, Small GTPase Ran-type spans 1 to 162 (NFKLVIVGDG…LYLARKLAGD (162 aa)). Position 9–16 (9–16 (DGGTGKTT)) interacts with GTP. The tract at residues 28–36 (KKYEPTIGV) is switch-I. GTP-binding positions include Gly59, 113–116 (NKVD), and 141–143 (SAK). Residues 59–75 (GQEKFGGLRDGYYIHGQ) are switch-II. The span at 187 to 200 (QHEAELAAAASQPL) shows a compositional bias: low complexity. The tract at residues 187–209 (QHEAELAAAASQPLPDDDDDAFD) is disordered.

This sequence belongs to the small GTPase superfamily. Ran family. In terms of assembly, found in a nuclear export complex with RanGTP, exportin and pre-miRNA.

The protein resides in the nucleus. Its function is as follows. GTP-binding protein involved in nucleocytoplasmic transport. Required for the import of protein into the nucleus and also for RNA export. Involved in chromatin condensation and control of cell cycle. The polypeptide is GTP-binding nuclear protein Ran1B (RAN1B) (Lotus japonicus (Lotus corniculatus var. japonicus)).